We begin with the raw amino-acid sequence, 358 residues long: Protein ocs (358 aa).

This sequence belongs to the lysopine/nopaline/octopine/opine/vitopine dehydrogenases family.

It catalyses the reaction D-octopine + NAD(+) + H2O = L-arginine + pyruvate + NADH + H(+). The enzyme catalyses D-lysopine + NADP(+) + H2O = L-lysine + pyruvate + NADPH + H(+). Its function is as follows. Reductive condensation of pyruvate and arginine, lysine, histidine, or octopine to form octopine, lysopine, histopine, or octopinic acid, respectively. NADPH is the preferred cofactor, but NADH can also be used. This is Protein ocs (ocs) from Agrobacterium vitis (Rhizobium vitis).